Here is a 1177-residue protein sequence, read N- to C-terminus: DNA-directed RNA polymerase subunit beta (1177 aa).

Residues 1154–1177 (RDTEDDDDHQSADKLNVEVETTKE) form a disordered region. The segment covering 1162–1177 (HQSADKLNVEVETTKE) has biased composition (basic and acidic residues).

The protein belongs to the RNA polymerase beta chain family. The RNAP catalytic core consists of 2 alpha, 1 beta, 1 beta' and 1 omega subunit. When a sigma factor is associated with the core the holoenzyme is formed, which can initiate transcription.

It carries out the reaction RNA(n) + a ribonucleoside 5'-triphosphate = RNA(n+1) + diphosphate. DNA-dependent RNA polymerase catalyzes the transcription of DNA into RNA using the four ribonucleoside triphosphates as substrates. The sequence is that of DNA-directed RNA polymerase subunit beta from Bacillus mycoides (strain KBAB4) (Bacillus weihenstephanensis).